The chain runs to 163 residues: Methyl-CpG-binding domain-containing protein 3 (163 aa).

The CW-type zinc-finger motif lies at 6-56 (TTLIDSYAAQCWKCLKVRSIESQEDYEEIRSKTLEKFFECKRCEEPGDMVM). In terms of domain architecture, MBD spans 65-137 (WFQDEHSIPK…EEVSFAAPKR (73 aa)). The disordered stretch occupies residues 140 to 163 (LKKKPVDSHSSSRNTEEDGVSRDA). Residues 153–163 (NTEEDGVSRDA) show a composition bias toward basic and acidic residues.

It localises to the nucleus. Probable transcriptional regulator. This Arabidopsis thaliana (Mouse-ear cress) protein is Methyl-CpG-binding domain-containing protein 3 (MBD3).